Here is a 218-residue protein sequence, read N- to C-terminus: Ribose-5-phosphate isomerase A (218 aa).

Residues 28–31 (TGST), 81–84 (DSAD), and 94–97 (KGKG) each bind substrate. The Proton acceptor role is filled by glutamate 103. Lysine 121 contacts substrate.

Belongs to the ribose 5-phosphate isomerase family. As to quaternary structure, homodimer.

The catalysed reaction is aldehydo-D-ribose 5-phosphate = D-ribulose 5-phosphate. Its pathway is carbohydrate degradation; pentose phosphate pathway; D-ribose 5-phosphate from D-ribulose 5-phosphate (non-oxidative stage): step 1/1. Catalyzes the reversible conversion of ribose-5-phosphate to ribulose 5-phosphate. This is Ribose-5-phosphate isomerase A from Blochmanniella pennsylvanica (strain BPEN).